A 321-amino-acid polypeptide reads, in one-letter code: GTP 3',8-cyclase (321 aa).

In terms of domain architecture, Radical SAM core spans 5–233; the sequence is SFNRVIDYIR…QGSSKIYTLE (229 aa). R14 contributes to the GTP binding site. The [4Fe-4S] cluster site is built by C21 and C25. Y27 contacts S-adenosyl-L-methionine. C28 is a [4Fe-4S] cluster binding site. Residue R64 participates in GTP binding. G68 contacts S-adenosyl-L-methionine. Residue S95 coordinates GTP. S119 provides a ligand contact to S-adenosyl-L-methionine. K155 serves as a coordination point for GTP. M189 serves as a coordination point for S-adenosyl-L-methionine. [4Fe-4S] cluster-binding residues include C249 and C252. Position 254–256 (254–256) interacts with GTP; that stretch reads RIR. C266 provides a ligand contact to [4Fe-4S] cluster.

The protein belongs to the radical SAM superfamily. MoaA family. As to quaternary structure, monomer and homodimer. [4Fe-4S] cluster is required as a cofactor.

It catalyses the reaction GTP + AH2 + S-adenosyl-L-methionine = (8S)-3',8-cyclo-7,8-dihydroguanosine 5'-triphosphate + 5'-deoxyadenosine + L-methionine + A + H(+). It participates in cofactor biosynthesis; molybdopterin biosynthesis. In terms of biological role, catalyzes the cyclization of GTP to (8S)-3',8-cyclo-7,8-dihydroguanosine 5'-triphosphate. This chain is GTP 3',8-cyclase, found in Helicobacter pylori (strain ATCC 700392 / 26695) (Campylobacter pylori).